A 336-amino-acid polypeptide reads, in one-letter code: Mitochondrial thiamine diphosphate carrier 1 (336 aa).

Transmembrane regions (helical) follow at residues 11–27 (RRAL…GGIS), 88–105 (VPAL…FTVL), 127–150 (YLSY…FDLL), 182–199 (LYSG…YAGL), 230–246 (SVSS…AGTF), and 303–322 (GLFP…FVVY). Solcar repeat units lie at residues 11–111 (RRAL…LKTF), 124–210 (LSPY…FKRS), and 231–328 (VSSF…ISDW).

This sequence belongs to the mitochondrial carrier (TC 2.A.29) family. As to expression, ubiquitous with highest expression in pollen.

Its subcellular location is the mitochondrion inner membrane. Functionally, mitochondrial transporter that mediates uptake of thiamine diphosphate (ThDP) into mitochondria. The polypeptide is Mitochondrial thiamine diphosphate carrier 1 (Zea mays (Maize)).